The sequence spans 156 residues: Small ribosomal subunit protein uS15 (156 aa).

The disordered stretch occupies residues 1 to 67; sequence MARMHTRRRG…GVQGTPIPDV (67 aa). Residues 10-19 show a composition bias toward basic and acidic residues; the sequence is GSSDSDKPAA. Over residues 21–32 the composition is skewed to acidic residues; it reads EPPEWSDVDEDA.

This sequence belongs to the universal ribosomal protein uS15 family. In terms of assembly, part of the 30S ribosomal subunit.

This chain is Small ribosomal subunit protein uS15, found in Haloarcula marismortui (strain ATCC 43049 / DSM 3752 / JCM 8966 / VKM B-1809) (Halobacterium marismortui).